Consider the following 176-residue polypeptide: Retinol-binding protein 4-B (176 aa).

Position 1 is an N-acetylserine (Ser1). 3 disulfides stabilise this stretch: Cys3-Cys159, Cys69-Cys173, and Cys119-Cys128. A substrate-binding site is contributed by Gln97.

Belongs to the calycin superfamily. Lipocalin family.

The protein resides in the secreted. In terms of biological role, RBP delivers retinol from the liver stores to the peripheral tissues. In plasma, the RBP-retinol complex interacts with transthyretin, this prevents its loss by filtration through the kidney glomeruli. The polypeptide is Retinol-binding protein 4-B (rbp4b) (Oncorhynchus mykiss (Rainbow trout)).